The primary structure comprises 126 residues: Regulatory protein MgsR (126 aa).

Cys13 and Cys16 are oxidised to a cystine.

This sequence belongs to the ArsC family.

It is found in the cytoplasm. Activity is controlled at multiple levels. Regulation includes a positive autoregulatory loop on mgsR transcription and a post-translational redox-sensitive activation step by an intramolecular disulfide bond formation in response to ethanol stress. In addition, protein stability is strictly controlled by rapid proteolytic degradation by the ClpXP and ClpCP proteases. The McsB protein-arginine kinase might serve as a proteolytic adapter for the ClpX ATPase in the degradation mechanism of MgsR. In terms of biological role, regulates transcription of a subregulon within the general stress response. Exerts positive and negative effects in response to ethanol stress. The protein is Regulatory protein MgsR of Bacillus subtilis (strain 168).